The primary structure comprises 129 residues: Small ribosomal subunit protein uS11 (129 aa).

It belongs to the universal ribosomal protein uS11 family. Part of the 30S ribosomal subunit. Interacts with proteins S7 and S18. Binds to IF-3.

Functionally, located on the platform of the 30S subunit, it bridges several disparate RNA helices of the 16S rRNA. Forms part of the Shine-Dalgarno cleft in the 70S ribosome. The chain is Small ribosomal subunit protein uS11 from Glaesserella parasuis serovar 5 (strain SH0165) (Haemophilus parasuis).